The following is a 122-amino-acid chain: Cysteine proteinase inhibitor 5 (122 aa).

A signal peptide spans 1-26 (MTSKVVFLLLLSLVVVLLPLYASAAA). Residues 29 to 117 (GGWSPISNVT…RNLTSFEPAN (89 aa)) form the Cystatin domain. Residue Asn36 is glycosylated (N-linked (GlcNAc...) asparagine). Positions 72 to 76 (QVVSG) match the Secondary area of contact motif. Asn109 carries N-linked (GlcNAc...) asparagine glycosylation.

It belongs to the cystatin family. Phytocystatin subfamily.

It is found in the secreted. Specific inhibitor of cysteine proteinases. Probably involved in the regulation of endogenous processes and in defense against pests and pathogens. The polypeptide is Cysteine proteinase inhibitor 5 (CYS5) (Arabidopsis thaliana (Mouse-ear cress)).